A 122-amino-acid polypeptide reads, in one-letter code: Large ribosomal subunit protein uL14 (122 aa).

It belongs to the universal ribosomal protein uL14 family. As to quaternary structure, part of the 50S ribosomal subunit. Forms a cluster with proteins L3 and L19. In the 70S ribosome, L14 and L19 interact and together make contacts with the 16S rRNA in bridges B5 and B8.

Functionally, binds to 23S rRNA. Forms part of two intersubunit bridges in the 70S ribosome. This chain is Large ribosomal subunit protein uL14, found in Latilactobacillus sakei subsp. sakei (strain 23K) (Lactobacillus sakei subsp. sakei).